A 148-amino-acid polypeptide reads, in one-letter code: Large-conductance mechanosensitive channel (148 aa).

The next 2 helical transmembrane spans lie at 9 to 29 (AFAV…GAAF) and 79 to 99 (IQTV…VKAI).

It belongs to the MscL family. As to quaternary structure, homopentamer.

It localises to the cell inner membrane. Its function is as follows. Channel that opens in response to stretch forces in the membrane lipid bilayer. May participate in the regulation of osmotic pressure changes within the cell. The sequence is that of Large-conductance mechanosensitive channel from Pseudomonas syringae pv. tomato (strain ATCC BAA-871 / DC3000).